A 644-amino-acid chain; its full sequence is Arginine--tRNA ligase (644 aa).

Positions 134 to 144 (VNPTKPLHMGH) match the 'HIGH' region motif.

It belongs to the class-I aminoacyl-tRNA synthetase family.

The protein localises to the cytoplasm. The enzyme catalyses tRNA(Arg) + L-arginine + ATP = L-arginyl-tRNA(Arg) + AMP + diphosphate. The polypeptide is Arginine--tRNA ligase (Thermococcus sibiricus (strain DSM 12597 / MM 739)).